A 388-amino-acid polypeptide reads, in one-letter code: LL-diaminopimelate aminotransferase (388 aa).

Substrate-binding residues include Y16 and G41. Pyridoxal 5'-phosphate-binding positions include Y70, S104 to K105, Y129, N179, Y210, and S239 to S241. Residues K105, Y129, and N179 each coordinate substrate. At K242 the chain carries N6-(pyridoxal phosphate)lysine. R250 is a binding site for pyridoxal 5'-phosphate. Substrate is bound at residue R368.

It belongs to the class-I pyridoxal-phosphate-dependent aminotransferase family. LL-diaminopimelate aminotransferase subfamily. In terms of assembly, homodimer. It depends on pyridoxal 5'-phosphate as a cofactor.

The enzyme catalyses (2S,6S)-2,6-diaminopimelate + 2-oxoglutarate = (S)-2,3,4,5-tetrahydrodipicolinate + L-glutamate + H2O + H(+). It functions in the pathway amino-acid biosynthesis; L-lysine biosynthesis via DAP pathway; LL-2,6-diaminopimelate from (S)-tetrahydrodipicolinate (aminotransferase route): step 1/1. Involved in the synthesis of meso-diaminopimelate (m-DAP or DL-DAP), required for both lysine and peptidoglycan biosynthesis. Catalyzes the direct conversion of tetrahydrodipicolinate to LL-diaminopimelate. In Nitratidesulfovibrio vulgaris (strain DP4) (Desulfovibrio vulgaris), this protein is LL-diaminopimelate aminotransferase.